We begin with the raw amino-acid sequence, 1032 residues long: Protein transport protein Sec24D (1032 aa).

The interval 1-260 is disordered; sequence MSQQGYVATP…GPPQPQKKLD (260 aa). The span at 102–133 shows a compositional bias: polar residues; it reads PSAQSSYPGPISTSSVTQLGSQLSAMQINSYG. Residues 198-212 show a composition bias toward pro residues; it reads GPPPPNAQYQPPPLP. A Phosphoserine modification is found at serine 266. 4 residues coordinate Zn(2+): cysteine 363, cysteine 366, cysteine 385, and cysteine 388. The tract at residues 363–388 is zinc finger-like; sequence CNRCKAYMCPFMQFIEGGRRYQCGFC. The Gelsolin-like repeat unit spans residues 901–974; sequence MLPAAVRCSE…PYSQQLRMIM (74 aa).

This sequence belongs to the SEC23/SEC24 family. SEC24 subfamily. COPII is composed of at least five proteins: the Sec23/24 complex, the Sec13/31 complex and Sar1. Interacts with TMED2 and TMED10. Interacts with CNIH4. Interacts with GOSR2 (via IxM motif) and STX5 (via IxM motif); recruits GOSR2 and STX5 into COPII-coated vesicles. Interacts with KCNA3; this interaction is reduced in the presence of KCNE4. In terms of tissue distribution, ubiquitously expressed, with higher amounts in placenta, pancreas, heart and liver.

The protein localises to the cytoplasmic vesicle. It localises to the COPII-coated vesicle membrane. The protein resides in the endoplasmic reticulum membrane. Its subcellular location is the cytoplasm. It is found in the cytosol. In terms of biological role, component of the coat protein complex II (COPII) which promotes the formation of transport vesicles from the endoplasmic reticulum (ER). The coat has two main functions, the physical deformation of the endoplasmic reticulum membrane into vesicles and the selection of cargo molecules for their transport to the Golgi complex. Plays a central role in cargo selection within the COPII complex and together with SEC24C may have a different specificity compared to SEC24A and SEC24B. May more specifically package GPI-anchored proteins through the cargo receptor TMED10. May also be specific for IxM motif-containing cargos like the SNAREs GOSR2 and STX5. This chain is Protein transport protein Sec24D, found in Homo sapiens (Human).